Reading from the N-terminus, the 274-residue chain is Probable starch degradation products transport system permease protein AmyC (274 aa).

Helical transmembrane passes span 11-31, 73-93, 103-123, 139-159, 184-204, and 238-258; these read LTFLGIVLSLLWISPFYIILV, LIITVFSILIIAIFSSMTAYA, VIIYMIFTVAMLIPFQSVMIP, LVFMYLGFGSSLGVFLYYGAL, IILPLLNPTTITLAVLDIMWI, and WNLGMAGLTIAILPVVIFYFL. The region spanning 69–259 is the ABC transmembrane type-1 domain; the sequence is FSNTLIITVF…LPVVIFYFLA (191 aa).

It belongs to the binding-protein-dependent transport system permease family. MalFG subfamily.

Its subcellular location is the cell membrane. Functionally, probably part of a binding-protein-dependent transport system starch degradation products. Probably responsible for the translocation of the substrate across the membrane. The protein is Probable starch degradation products transport system permease protein AmyC (amyC) of Thermoanaerobacterium thermosulfurigenes (Clostridium thermosulfurogenes).